We begin with the raw amino-acid sequence, 775 residues long: Subtilisin-like protease SBT1.5 (775 aa).

Positions 1-19 are cleaved as a signal peptide; that stretch reads MAFFFYFFFLLTLSSPSSS. The propeptide at 20–103 is activation peptide; the sequence is ASSSNSLTYI…VIPEQVRHLH (84 aa). Residues 27–103 form the Inhibitor I9 domain; the sequence is TYIVHVDHEA…VIPEQVRHLH (77 aa). One can recognise a Peptidase S8 domain in the interval 107 to 617; sequence SPEFLGLRST…SGHVHPTKAM (511 aa). The Charge relay system role is filled by Asp-137. Asn-196 carries an N-linked (GlcNAc...) asparagine glycan. His-210 functions as the Charge relay system in the catalytic mechanism. In terms of domain architecture, PA spans 367-459; it reads MYPLVYGGSL…VGASGGDEIR (93 aa). The active-site Charge relay system is Ser-549. N-linked (GlcNAc...) asparagine glycans are attached at residues Asn-599, Asn-638, and Asn-762.

This sequence belongs to the peptidase S8 family.

It localises to the secreted. The sequence is that of Subtilisin-like protease SBT1.5 from Arabidopsis thaliana (Mouse-ear cress).